A 115-amino-acid polypeptide reads, in one-letter code: U3-lycotoxin-Ls1a (115 aa).

An N-terminal signal peptide occupies residues 1–20; that stretch reads MKFVLLFGVLLVTLFSYSSA. The propeptide occupies 21-44; sequence EMLDDFDQADEEELLSLIEKEEAR. 4 cysteine pairs are disulfide-bonded: Cys-48–Cys-63, Cys-55–Cys-72, Cys-62–Cys-87, and Cys-74–Cys-85.

The protein belongs to the neurotoxin 19 (CSTX) family. 01 subfamily. Expressed by the venom gland.

Its subcellular location is the secreted. The protein is U3-lycotoxin-Ls1a of Lycosa singoriensis (Wolf spider).